A 315-amino-acid polypeptide reads, in one-letter code: 6-phosphogluconolactonase-like protein 2 (315 aa).

Phosphoserine occurs at positions 42 and 64. The tract at residues 59 to 85 (CKSTASAAEGKSGSSGSGSGSSKPKKE) is disordered. A compositionally biased stretch (low complexity) spans 60-70 (KSTASAAEGKS).

Belongs to the glucosamine/galactosamine-6-phosphate isomerase family. 6-phosphogluconolactonase subfamily.

It is found in the cytoplasm. May be involved in regulation of tRNA subcellular distribution. This is 6-phosphogluconolactonase-like protein 2 (SOL2) from Saccharomyces cerevisiae (strain ATCC 204508 / S288c) (Baker's yeast).